The sequence spans 338 residues: Glycerol-3-phosphate dehydrogenase [NAD(P)+] (338 aa).

Residues S14, Y15, H35, and K109 each contribute to the NADPH site. Positions 109, 138, and 140 each coordinate sn-glycerol 3-phosphate. An NADPH-binding site is contributed by A142. Sn-glycerol 3-phosphate-binding residues include K194, D247, S257, R258, and N259. K194 (proton acceptor) is an active-site residue. NADPH is bound at residue R258. Residues V282 and E284 each contribute to the NADPH site.

The protein belongs to the NAD-dependent glycerol-3-phosphate dehydrogenase family.

It localises to the cytoplasm. The catalysed reaction is sn-glycerol 3-phosphate + NAD(+) = dihydroxyacetone phosphate + NADH + H(+). The enzyme catalyses sn-glycerol 3-phosphate + NADP(+) = dihydroxyacetone phosphate + NADPH + H(+). It participates in membrane lipid metabolism; glycerophospholipid metabolism. Functionally, catalyzes the reduction of the glycolytic intermediate dihydroxyacetone phosphate (DHAP) to sn-glycerol 3-phosphate (G3P), the key precursor for phospholipid synthesis. The sequence is that of Glycerol-3-phosphate dehydrogenase [NAD(P)+] from Shewanella sediminis (strain HAW-EB3).